The following is a 528-amino-acid chain: PC4 and SFRS1-interacting protein (528 aa).

The PWWP domain occupies 7-64 (PGDLIFAKMKGYPHWPARVDEVPDGAVKPPTNKLPIFFFGTHETAFLGPKDIFPYSEN). The interval 61-348 (YSENKEKYGK…EKKRETSMDS (288 aa)) is disordered. Lys75 is covalently cross-linked (Glycyl lysine isopeptide (Lys-Gly) (interchain with G-Cter in SUMO2)). Over residues 92-106 (FSSQQASTKQSNASS) the composition is skewed to polar residues. A phosphoserine mark is found at Ser102, Ser105, and Ser106. The span at 113-135 (KETNVSKEDTDQEEKASNEDVTK) shows a compositional bias: basic and acidic residues. 2 positions are modified to phosphothreonine: Thr115 and Thr122. Ser129 carries the phosphoserine modification. Thr141 is subject to Phosphothreonine. Residues 144–153 (AARRGRKRKA) show a composition bias toward basic residues. The Nuclear localization signal motif lies at 146 to 156 (RRGRKRKAEKQ). Phosphoserine is present on residues Ser176 and Ser205. A compositionally biased stretch (basic and acidic residues) spans 212 to 260 (DEDKSKKKGPEEKQPKKQLKKEEEGQKEEEKPRKEPDKKEGKKEVESKR). Ser270 carries the post-translational modification Phosphoserine. At Thr271 the chain carries Phosphothreonine. Residues Ser272 and Ser274 each carry the phosphoserine modification. Over residues 285 to 300 (KRKGGRNFQAAHRRNM) the composition is skewed to basic residues. Basic and acidic residues predominate over residues 303 to 348 (GQHEKEAGDRKRKQEEQMETEQQNKDEGKKPEVKKVEKKRETSMDS). 2 coiled-coil regions span residues 306–332 (EKEAGDRKRKQEEQMETEQQNKDEGKK) and 369–393 (NRCIEALDELASLQVTMQQAQKHTE). An integrase-binding domain (IBD) region spans residues 338-415 (VEKKRETSMD…VSQVIMEKST (78 aa)). At Ser432 the chain carries Phosphoserine. Thr435 bears the Phosphothreonine mark. Position 441 is a phosphoserine (Ser441). Positions 444-471 (EQRQHEEANKTKDQGKKGPNKKLEKEPT) are enriched in basic and acidic residues. Residues 444–528 (EQRQHEEANK…ISLKESTLDN (85 aa)) form a disordered region. A compositionally biased stretch (polar residues) spans 472–492 (GTKSLNGGSDAQESNHPQHNG). The segment covering 496 to 528 (EDGKDSREASSKTKPPGEEREAEISLKESTLDN) has biased composition (basic and acidic residues). Arg515 bears the Citrulline mark. Ser520 bears the Phosphoserine mark. A Phosphothreonine modification is found at Thr525.

It belongs to the HDGF family. As to quaternary structure, monomer. Interacts with IFRD1/PC4. Interacts (via IBD domain) with POGZ (via IBM motif) and CDCA7L (via IBM motifs). Interacts (via IBD domain) with KMT2A (via IBM motifs) with a moderate affinity whereas interacts with the KMT2A-MEN1 complex with a greater affinity; MEN1 enhances interaction of KMT2A with PSIP1. Interacts (via IBD domain) with IWS1 (via IBM motif), MED1 (via IBM motif) and DBF4 (via IBM motifs). In terms of processing, citrullinated by PADI4.

It localises to the nucleus. In terms of biological role, transcriptional coactivator involved in neuroepithelial stem cell differentiation and neurogenesis. Involved in particular in lens epithelial cell gene regulation and stress responses. May play an important role in lens epithelial to fiber cell terminal differentiation. May play a protective role during stress-induced apoptosis. This Mus musculus (Mouse) protein is PC4 and SFRS1-interacting protein (Psip1).